The following is a 120-amino-acid chain: Large ribosomal subunit protein uL18 (120 aa).

Residues 1-26 are disordered; it reads MKLTRRESKQRRHRRVRGKVQGSPER. Residues 8 to 18 show a composition bias toward basic residues; that stretch reads SKQRRHRRVRG.

The protein belongs to the universal ribosomal protein uL18 family. In terms of assembly, part of the 50S ribosomal subunit; part of the 5S rRNA/L5/L18/L25 subcomplex. Contacts the 5S and 23S rRNAs.

Its function is as follows. This is one of the proteins that bind and probably mediate the attachment of the 5S RNA into the large ribosomal subunit, where it forms part of the central protuberance. This chain is Large ribosomal subunit protein uL18, found in Trichormus variabilis (strain ATCC 29413 / PCC 7937) (Anabaena variabilis).